The chain runs to 235 residues: Zein-alpha PMS1 (235 aa).

The N-terminal stretch at 1 to 21 (MAAKIFCLLMLLGLSASAATA) is a signal peptide.

This sequence belongs to the zein family.

Zeins are major seed storage proteins. The protein is Zein-alpha PMS1 (ZMPMS1) of Zea mays (Maize).